The following is a 166-amino-acid chain: Small ribosomal subunit protein uS5 (166 aa).

The S5 DRBM domain occupies 11–74 (LIEKLVSVKR…ENAKKNMVSV (64 aa)).

The protein belongs to the universal ribosomal protein uS5 family. Part of the 30S ribosomal subunit. Contacts proteins S4 and S8.

With S4 and S12 plays an important role in translational accuracy. Its function is as follows. Located at the back of the 30S subunit body where it stabilizes the conformation of the head with respect to the body. This chain is Small ribosomal subunit protein uS5, found in Francisella tularensis subsp. holarctica (strain LVS).